Consider the following 156-residue polypeptide: MKLQLVAVGTKMPDWVQTGFMEYLRRFPKDMPFELTEVPAGKRGKNADIKRILEKEGEMMLAATGKGNRIVTLDIPGQPWETPQLASQLERWKQDGRDVSLLIGGPEGLSPACKAAAEQSWSLSALTLPHPLVRVLVAESLYRAWSITANHPYHRE.

S-adenosyl-L-methionine contacts are provided by residues L73, G104, and 123 to 128 (LSALTL).

Belongs to the RNA methyltransferase RlmH family. Homodimer.

It localises to the cytoplasm. The enzyme catalyses pseudouridine(1915) in 23S rRNA + S-adenosyl-L-methionine = N(3)-methylpseudouridine(1915) in 23S rRNA + S-adenosyl-L-homocysteine + H(+). Specifically methylates the pseudouridine at position 1915 (m3Psi1915) in 23S rRNA. The sequence is that of Ribosomal RNA large subunit methyltransferase H from Erwinia tasmaniensis (strain DSM 17950 / CFBP 7177 / CIP 109463 / NCPPB 4357 / Et1/99).